A 276-amino-acid chain; its full sequence is MTLSLKLIGYPIEHSMSPWIHNEFLKRSNLEGTYELFEISPEESFEDNVTTLKKSVLTGFNVTVPYKQKIMQFLDEVDDTANLMGAVNTVSIRDGKWIGYNTDGIGYLRSLYAAYPFLKGVTNKRVLILGAGGAARGIFHALVNEGYNNIKIANRTLSRAESIIGTNKQALAISLEEAAEELHQFDLVIQTSAVGMNEPRSIIILDRINEDTVVSDIVYQPLETHFLQLAKQRTPYIHHGHTMLLYQAQAAFEIWTGTNVNVSGMDMQIEQILKGR.

Shikimate is bound by residues 15–17 and Thr-63; that span reads SMS. Lys-67 (proton acceptor) is an active-site residue. Asp-79 contributes to the NADP(+) binding site. Positions 88 and 103 each coordinate shikimate. NADP(+) contacts are provided by residues 130–134, 154–159, and Ile-217; these read GAGGA and NRTLSR. Tyr-219 lines the shikimate pocket. Residue Gly-240 coordinates NADP(+).

The protein belongs to the shikimate dehydrogenase family. In terms of assembly, homodimer.

It catalyses the reaction shikimate + NADP(+) = 3-dehydroshikimate + NADPH + H(+). It participates in metabolic intermediate biosynthesis; chorismate biosynthesis; chorismate from D-erythrose 4-phosphate and phosphoenolpyruvate: step 4/7. Its function is as follows. Involved in the biosynthesis of the chorismate, which leads to the biosynthesis of aromatic amino acids. Catalyzes the reversible NADPH linked reduction of 3-dehydroshikimate (DHSA) to yield shikimate (SA). This Oceanobacillus iheyensis (strain DSM 14371 / CIP 107618 / JCM 11309 / KCTC 3954 / HTE831) protein is Shikimate dehydrogenase (NADP(+)).